Consider the following 311-residue polypeptide: Cytosolic Fe-S cluster assembly factor Nubp1 homolog (311 aa).

The segment at 1 to 21 is disordered; that stretch reads MQAPPPEHCPGVESEEAGKGS. [4Fe-4S] cluster contacts are provided by Cys-9, Cys-23, Cys-26, and Cys-32. 63–70 serves as a coordination point for ATP; sequence GKGGVGKS. 2 residues coordinate [4Fe-4S] cluster: Cys-240 and Cys-243.

Belongs to the Mrp/NBP35 ATP-binding proteins family. NUBP1/NBP35 subfamily. Heterotetramer of 2 Nubp1 and 2 Nubp2 chains. The cofactor is [4Fe-4S] cluster.

Its subcellular location is the cytoplasm. In terms of biological role, component of the cytosolic iron-sulfur (Fe/S) protein assembly (CIA) machinery. Required for maturation of extramitochondrial Fe-S proteins. The Nubp1-Nubp2 heterotetramer forms a Fe-S scaffold complex, mediating the de novo assembly of an Fe-S cluster and its transfer to target apoproteins. This is Cytosolic Fe-S cluster assembly factor Nubp1 homolog from Drosophila melanogaster (Fruit fly).